The sequence spans 355 residues: RGG repeats nuclear RNA binding protein A (355 aa).

Alanine 2 is modified (N-acetylalanine). Positions 26–225 are disordered; sequence KIDKSKKSGQ…VEEKEPEDKE (200 aa). Residues 37 to 47 are compositionally biased toward low complexity; that stretch reads SSLPAKSAPKL. 2 stretches are compositionally biased toward gly residues: residues 67 to 81 and 114 to 141; these read RGGG…GRGG and GGGA…SNEG. The Nuclear localization signal motif lies at 132–139; the sequence is GRRGGFSN. Basic and acidic residues predominate over residues 143 to 168; that stretch reads DGERPRRAFERRSGTGRGSDFKRDGS. An Arginine-rich RNA-binding motif E-R-P-R-R-X-[F/Y]-[E/D]-R-R-S motif is present at residues 145–155; sequence ERPRRAFERRS. Positions 177 to 190 are enriched in low complexity; the sequence is GEEIAAETEAVAGV. Basic and acidic residues-rich tracts occupy residues 191–202 and 209–225; these read ETEKDVGEKPAV and ANKE…EDKE. In terms of domain architecture, FF spans 234 to 289; the sequence is ILEEKKKALQSLTTSERKVDTKVFESMQQLSNKKSNDEIFIKLGSDKDKRKDDKEE. Serine 268 carries the phosphoserine modification. A compositionally biased stretch (basic and acidic residues) spans 277–292; that stretch reads GSDKDKRKDDKEEKAK. The tract at residues 277–355 is disordered; sequence GSDKDKRKDD…AAQFPSLGGK (79 aa). Gly residues predominate over residues 323-333; sequence GRGGVSSGESG. The residue at position 351 (serine 351) is a Phosphoserine.

It belongs to the SERBP1-HABP4 family. Expressed in seedlings, leaves, roots, inflorescences, and siliques. Constitutively expressed in seedlings and roots.

It is found in the cytoplasm. It localises to the perinuclear region. The protein resides in the nucleus. Its function is as follows. Ribosome-binding protein that acts as a regulator of mRNA translation by promoting ribosome inactivation. Binds RNA. Regulates responses to abscisic acid (ABA). Promotes stomata closure in drought conditions. Involved in resistance to salt and drought stresses via the accumulation of Pro. The sequence is that of RGG repeats nuclear RNA binding protein A from Arabidopsis thaliana (Mouse-ear cress).